The chain runs to 1489 residues: ZEB2-regulated ABC transporter 1 (1489 aa).

A disordered region spans residues Met-1 to Glu-55. Asn-7 carries an N-linked (GlcNAc...) asparagine glycan. Acidic residues predominate over residues Ser-44 to Gln-53. N-linked (GlcNAc...) asparagine glycosylation is found at Asn-70, Asn-73, Asn-118, Asn-332, and Asn-469. In terms of domain architecture, ABC transporter 1 spans Leu-152–Asp-408. Transmembrane regions (helical) follow at residues Leu-513–Ile-533, Gly-552–Thr-572, Ile-599–Phe-619, Gly-628–Phe-648, and Met-662–Val-682. An N-linked (GlcNAc...) asparagine glycan is attached at Asn-714. The chain crosses the membrane as a helical span at residues Gly-773–Ile-793. A disordered region spans residues Pro-811 to Asn-834. Residues Glu-819–Asn-834 are compositionally biased toward polar residues. An ABC transporter 2 domain is found at Phe-846–Gly-1088. Gly-882 to Thr-889 lines the ATP pocket. 5 helical membrane-spanning segments follow: residues Ala-1190–Leu-1210, Phe-1218–Phe-1238, Ile-1269–Phe-1289, Trp-1307–Ile-1327, and Ala-1333–Ala-1353. Residue Asn-1402 is glycosylated (N-linked (GlcNAc...) asparagine). The helical transmembrane segment at Gly-1457 to Ile-1477 threads the bilayer.

This sequence belongs to the ABC transporter superfamily. ABCG family. PDR (TC 3.A.1.205) subfamily.

It is found in the cell membrane. The protein resides in the vacuole membrane. ABC transporter involved in zearalenone production. This chain is ZEB2-regulated ABC transporter 1, found in Gibberella zeae (strain ATCC MYA-4620 / CBS 123657 / FGSC 9075 / NRRL 31084 / PH-1) (Wheat head blight fungus).